The following is a 605-amino-acid chain: Elongation factor 4 (605 aa).

A tr-type G domain is found at 9 to 192 (NRIRNFCIIA…AIVQRIPAPA (184 aa)). GTP is bound by residues 21–26 (DHGKST) and 139–142 (NKID).

This sequence belongs to the TRAFAC class translation factor GTPase superfamily. Classic translation factor GTPase family. LepA subfamily.

It is found in the cell inner membrane. The catalysed reaction is GTP + H2O = GDP + phosphate + H(+). Required for accurate and efficient protein synthesis under certain stress conditions. May act as a fidelity factor of the translation reaction, by catalyzing a one-codon backward translocation of tRNAs on improperly translocated ribosomes. Back-translocation proceeds from a post-translocation (POST) complex to a pre-translocation (PRE) complex, thus giving elongation factor G a second chance to translocate the tRNAs correctly. Binds to ribosomes in a GTP-dependent manner. The chain is Elongation factor 4 from Pelodictyon phaeoclathratiforme (strain DSM 5477 / BU-1).